Consider the following 363-residue polypeptide: tRNA-specific 2-thiouridylase MnmA (363 aa).

ATP is bound by residues 13 to 20 (GLSGGVDS) and Met39. The tract at residues 99–101 (NPD) is interaction with target base in tRNA. Cys104 acts as the Nucleophile in catalysis. Cys104 and Cys200 are joined by a disulfide. An ATP-binding site is contributed by Gly128. An interaction with tRNA region spans residues 150 to 152 (KDQ). The active-site Cysteine persulfide intermediate is Cys200. Residues 310–311 (RY) form an interaction with tRNA region.

This sequence belongs to the MnmA/TRMU family.

Its subcellular location is the cytoplasm. The enzyme catalyses S-sulfanyl-L-cysteinyl-[protein] + uridine(34) in tRNA + AH2 + ATP = 2-thiouridine(34) in tRNA + L-cysteinyl-[protein] + A + AMP + diphosphate + H(+). Its function is as follows. Catalyzes the 2-thiolation of uridine at the wobble position (U34) of tRNA, leading to the formation of s(2)U34. This chain is tRNA-specific 2-thiouridylase MnmA, found in Ruthia magnifica subsp. Calyptogena magnifica.